We begin with the raw amino-acid sequence, 218 residues long: uncharacterized protein (218 aa).

Composition is skewed to polar residues over residues 1-21 (MSSQQQESEASGYNTSASSEF) and 68-102 (LNTSNDSNLVRNTARSPDSSMNGRPQTRRSTSSDI). Disordered stretches follow at residues 1-39 (MSSQQQESEASGYNTSASSEFGSLEDSHQFVSPVTRHAS), 63-116 (EKRL…STSG), and 170-205 (GAKRKMATPSQSLKRQEKQSPLESRHGGLRSRGTPQ). Residues 183 to 195 (KRQEKQSPLESRH) are compositionally biased toward basic and acidic residues.

This is an uncharacterized protein from Caenorhabditis elegans.